Here is a 445-residue protein sequence, read N- to C-terminus: MQTKIFARLAGIGRARFVGTMPDKTKFISKSGTYPQGFSLNGIASGVKANGKKDLAILFSSRPCNAAAVFTKNAFQAAPVQVSRQTLNGCGGKDIHCVVFNSGCANAVTGEGGLMDAQLITAEADNLTRPHWTSWTENSEEFPSSLVMSTGVIGQRLKLDKIQSGLEHAVEDLGSTHEYWMRAAEAICTTDTFPKLVSRELSIAGKVYRIAGFAKGAGMINPNLATLLGLFVTDAPISVDAVRSILRHAINNSFNSISIDGDTSTNDTIAFLANGAAGGSEITKSSPAYKEIRDAVTDIAQQLAKLVVRDGEGATKFVTVQVRGARSEKDAALVASTISNSALVKTAFFGEDANWGRILCAVGYSGAAVNPPATTVSFIPADGTEPLKLLVNGEPQNVDETRASEILSQDELTVDVDLGCGPYAKTNWTCDFSYDYVRINADYRS.

6 residues coordinate substrate: Thr189, Lys215, Thr226, Glu312, Asn440, and Ser445. Thr226 serves as the catalytic Nucleophile.

Belongs to the ArgJ family. As to quaternary structure, heterodimer of an alpha and a beta chain. Post-translationally, the alpha and beta chains are autoproteolytically processed from a single precursor protein within the mitochondrion.

The protein localises to the mitochondrion matrix. It catalyses the reaction N(2)-acetyl-L-ornithine + L-glutamate = N-acetyl-L-glutamate + L-ornithine. It carries out the reaction L-glutamate + acetyl-CoA = N-acetyl-L-glutamate + CoA + H(+). It participates in amino-acid biosynthesis; L-arginine biosynthesis; L-ornithine and N-acetyl-L-glutamate from L-glutamate and N(2)-acetyl-L-ornithine (cyclic): step 1/1. Its pathway is amino-acid biosynthesis; L-arginine biosynthesis; N(2)-acetyl-L-ornithine from L-glutamate: step 1/4. Catalyzes two activities which are involved in the cyclic version of arginine biosynthesis: the synthesis of acetylglutamate from glutamate and acetyl-CoA, and of ornithine by transacetylation between acetylornithine and glutamate. The polypeptide is Arginine biosynthesis bifunctional protein ArgJ, mitochondrial (Schizosaccharomyces pombe (strain 972 / ATCC 24843) (Fission yeast)).